The chain runs to 398 residues: Bifunctional enzyme IspD/IspF (398 aa).

Residues 1–234 are 2-C-methyl-D-erythritol 4-phosphate cytidylyltransferase; that stretch reads MPNPPRTAAI…SRLTALLGDI (234 aa). Residues 235–398 are 2-C-methyl-D-erythritol 2,4-cyclodiphosphate synthase; the sequence is RTGTGYDVHA…LPWGAEGLAG (164 aa). Positions 241 and 243 each coordinate a divalent metal cation. Residues 241 to 243 and 267 to 268 each bind 4-CDP-2-C-methyl-D-erythritol 2-phosphate; these read DVH and HS. Histidine 275 lines the a divalent metal cation pocket. 4-CDP-2-C-methyl-D-erythritol 2-phosphate-binding positions include 289-291, 365-368, phenylalanine 372, and arginine 375; these read DIG and TTSE.

It in the N-terminal section; belongs to the IspD/TarI cytidylyltransferase family. IspD subfamily. In the C-terminal section; belongs to the IspF family. The cofactor is a divalent metal cation.

It carries out the reaction 2-C-methyl-D-erythritol 4-phosphate + CTP + H(+) = 4-CDP-2-C-methyl-D-erythritol + diphosphate. It catalyses the reaction 4-CDP-2-C-methyl-D-erythritol 2-phosphate = 2-C-methyl-D-erythritol 2,4-cyclic diphosphate + CMP. The protein operates within isoprenoid biosynthesis; isopentenyl diphosphate biosynthesis via DXP pathway; isopentenyl diphosphate from 1-deoxy-D-xylulose 5-phosphate: step 2/6. It functions in the pathway isoprenoid biosynthesis; isopentenyl diphosphate biosynthesis via DXP pathway; isopentenyl diphosphate from 1-deoxy-D-xylulose 5-phosphate: step 4/6. Bifunctional enzyme that catalyzes the formation of 4-diphosphocytidyl-2-C-methyl-D-erythritol from CTP and 2-C-methyl-D-erythritol 4-phosphate (MEP) (IspD), and catalyzes the conversion of 4-diphosphocytidyl-2-C-methyl-D-erythritol 2-phosphate (CDP-ME2P) to 2-C-methyl-D-erythritol 2,4-cyclodiphosphate (ME-CPP) with a corresponding release of cytidine 5-monophosphate (CMP) (IspF). In Rhodopseudomonas palustris (strain BisB5), this protein is Bifunctional enzyme IspD/IspF.